The chain runs to 295 residues: Phosphatidylserine decarboxylase proenzyme (295 aa).

Catalysis depends on charge relay system; for autoendoproteolytic cleavage activity residues aspartate 113, histidine 169, and serine 256. The Schiff-base intermediate with substrate; via pyruvic acid; for decarboxylase activity role is filled by serine 256. A Pyruvic acid (Ser); by autocatalysis modification is found at serine 256.

Belongs to the phosphatidylserine decarboxylase family. PSD-B subfamily. Prokaryotic type II sub-subfamily. As to quaternary structure, heterodimer of a large membrane-associated beta subunit and a small pyruvoyl-containing alpha subunit. Pyruvate serves as cofactor. Is synthesized initially as an inactive proenzyme. Formation of the active enzyme involves a self-maturation process in which the active site pyruvoyl group is generated from an internal serine residue via an autocatalytic post-translational modification. Two non-identical subunits are generated from the proenzyme in this reaction, and the pyruvate is formed at the N-terminus of the alpha chain, which is derived from the carboxyl end of the proenzyme. The autoendoproteolytic cleavage occurs by a canonical serine protease mechanism, in which the side chain hydroxyl group of the serine supplies its oxygen atom to form the C-terminus of the beta chain, while the remainder of the serine residue undergoes an oxidative deamination to produce ammonia and the pyruvoyl prosthetic group on the alpha chain. During this reaction, the Ser that is part of the protease active site of the proenzyme becomes the pyruvoyl prosthetic group, which constitutes an essential element of the active site of the mature decarboxylase.

Its subcellular location is the cell membrane. It catalyses the reaction a 1,2-diacyl-sn-glycero-3-phospho-L-serine + H(+) = a 1,2-diacyl-sn-glycero-3-phosphoethanolamine + CO2. It participates in phospholipid metabolism; phosphatidylethanolamine biosynthesis; phosphatidylethanolamine from CDP-diacylglycerol: step 2/2. Its function is as follows. Catalyzes the formation of phosphatidylethanolamine (PtdEtn) from phosphatidylserine (PtdSer). This Clostridium novyi (strain NT) protein is Phosphatidylserine decarboxylase proenzyme.